Reading from the N-terminus, the 485-residue chain is Glutamyl-tRNA(Gln) amidotransferase subunit A (485 aa).

Active-site charge relay system residues include lysine 78 and serine 153. Residue serine 177 is the Acyl-ester intermediate of the active site.

The protein belongs to the amidase family. GatA subfamily. Heterotrimer of A, B and C subunits.

It carries out the reaction L-glutamyl-tRNA(Gln) + L-glutamine + ATP + H2O = L-glutaminyl-tRNA(Gln) + L-glutamate + ADP + phosphate + H(+). In terms of biological role, allows the formation of correctly charged Gln-tRNA(Gln) through the transamidation of misacylated Glu-tRNA(Gln) in organisms which lack glutaminyl-tRNA synthetase. The reaction takes place in the presence of glutamine and ATP through an activated gamma-phospho-Glu-tRNA(Gln). The chain is Glutamyl-tRNA(Gln) amidotransferase subunit A from Syntrophus aciditrophicus (strain SB).